The primary structure comprises 360 residues: MKPTIISKLESLKERHEELEALLGEASVISDQDKFRAYSKEYAQLEDVVKCFARWNQLNSNMEEAQLLLDDPSMKEMAQEEIEACKTEIEQVEQQLQILLLPKDPNDEYNCYLEIRAGTGGDEAGIFAGDLFRMYSRYAESKRWKVEVLSANESEQGGYKEIIVKVNGEGVYGQLKFESGGHRVQRVPKTESQGRIHTSACTVAVMPELPESELPEINPSDLRIDTYRSSGAGGQHVNTTDSAVRITHIPTGIVVECQDERSQHKNKAKAMSVLASRIVQAEKERQEQAQADTRRNLLGSGDRSDKIRTYNYPQGRVTDHRINLTVYRLDEVMNGKIDELIQPIITEYQADQLAALSEQA.

Q235 carries the N5-methylglutamine modification. Over residues E284–R295 the composition is skewed to basic and acidic residues. The disordered stretch occupies residues E284–T309.

This sequence belongs to the prokaryotic/mitochondrial release factor family. Methylated by PrmC. Methylation increases the termination efficiency of RF1.

The protein resides in the cytoplasm. Its function is as follows. Peptide chain release factor 1 directs the termination of translation in response to the peptide chain termination codons UAG and UAA. The polypeptide is Peptide chain release factor 1 (prfA) (Pasteurella multocida (strain Pm70)).